The following is a 1400-amino-acid chain: Alpha-(1-&gt;3)-arabinofuranosyltransferase (1400 aa).

The N-terminal stretch at 1 to 30 (MAPLSRKWLPVVGAVALALTFAQSPGQVSP) is a signal peptide. Transmembrane regions (helical) follow at residues 67-87 (YLFP…PGWV), 91-111 (LWWA…AEAL), 139-159 (ISSE…TILA), 179-199 (VALM…PAVI), 215-235 (AWWL…LTQL), 282-302 (LVTG…GLAG), 314-334 (LVTM…GGLA), and 401-421 (VAVA…AWTG). Positions 700 to 883 (AEPVVGGWTG…WDLGSELLGR (184 aa)) constitute an F5/8 type C domain. 4 helical membrane passes run 1256 to 1276 (LYRA…LLAF), 1297 to 1317 (WAAA…GVMV), 1338 to 1358 (VTVG…SRHP), and 1369 to 1389 (WASV…SVVA).

Its subcellular location is the membrane. The catalysed reaction is Adds an alpha-D-arabinofuranosyl group from trans,octacis-decaprenylphospho-beta-D-arabinofuranose at the 3-O-position of an alpha-(1-&gt;5)-arabinofuranan chain attached to a beta-(1-&gt;5)-galactofuranan chain.. The protein operates within cell wall biogenesis; cell wall polysaccharide biosynthesis. Functionally, involved in the biosynthesis of the arabinogalactan (AG) region of the mycolylarabinogalactan-peptidoglycan (mAGP) complex, an essential component of the mycobacterial cell wall. Catalyzes the addition of an arabinofuranosyl (Araf) residue from the sugar donor decaprenyl-phospho-arabinose (DPA) on the C-3 of an alpha-(1-&gt;5)-linked Araf from the arabinan backbone of AG. The chain is Alpha-(1-&gt;3)-arabinofuranosyltransferase (aftD) from Mycobacterium tuberculosis (strain ATCC 25618 / H37Rv).